The sequence spans 411 residues: Multifunctional CCA protein (411 aa).

ATP-binding residues include Gly-8 and Arg-11. The CTP site is built by Gly-8 and Arg-11. Mg(2+) is bound by residues Asp-21 and Asp-23. ATP is bound by residues Arg-91, Arg-137, and Arg-140. 3 residues coordinate CTP: Arg-91, Arg-137, and Arg-140. The region spanning 228–329 (CGIHTLMVAK…VNILDQIDSW (102 aa)) is the HD domain.

The protein belongs to the tRNA nucleotidyltransferase/poly(A) polymerase family. Bacterial CCA-adding enzyme type 1 subfamily. As to quaternary structure, monomer. Can also form homodimers and oligomers. Mg(2+) is required as a cofactor. The cofactor is Ni(2+).

It catalyses the reaction a tRNA precursor + 2 CTP + ATP = a tRNA with a 3' CCA end + 3 diphosphate. The catalysed reaction is a tRNA with a 3' CCA end + 2 CTP + ATP = a tRNA with a 3' CCACCA end + 3 diphosphate. In terms of biological role, catalyzes the addition and repair of the essential 3'-terminal CCA sequence in tRNAs without using a nucleic acid template. Adds these three nucleotides in the order of C, C, and A to the tRNA nucleotide-73, using CTP and ATP as substrates and producing inorganic pyrophosphate. tRNA 3'-terminal CCA addition is required both for tRNA processing and repair. Also involved in tRNA surveillance by mediating tandem CCA addition to generate a CCACCA at the 3' terminus of unstable tRNAs. While stable tRNAs receive only 3'-terminal CCA, unstable tRNAs are marked with CCACCA and rapidly degraded. This is Multifunctional CCA protein from Photobacterium profundum (strain SS9).